Reading from the N-terminus, the 33-residue chain is Helofensin-1 (33 aa).

Belongs to the beta-defensin family. Helofensin subfamily. In terms of tissue distribution, expressed by the venom gland.

The protein resides in the secreted. Lethal toxin which possesses an inhibitory effect on direct electrical stimulation of the isolated hemi-diaphragm. Neither hemorrhagic nor hemolytic activities are detected. Phospholipase A2 activity, proteolytic activity and arginine esterolytic activity are absent. The chain is Helofensin-1 from Heloderma horridum horridum (Mexican beaded lizard).